The primary structure comprises 310 residues: Lipoyl synthase (310 aa).

7 residues coordinate [4Fe-4S] cluster: C61, C66, C72, C87, C91, C94, and S300. In terms of domain architecture, Radical SAM core spans 73 to 289 (FNNGTATFMI…EYIALSLGFS (217 aa)).

This sequence belongs to the radical SAM superfamily. Lipoyl synthase family. Requires [4Fe-4S] cluster as cofactor.

The protein localises to the cytoplasm. It carries out the reaction [[Fe-S] cluster scaffold protein carrying a second [4Fe-4S](2+) cluster] + N(6)-octanoyl-L-lysyl-[protein] + 2 oxidized [2Fe-2S]-[ferredoxin] + 2 S-adenosyl-L-methionine + 4 H(+) = [[Fe-S] cluster scaffold protein] + N(6)-[(R)-dihydrolipoyl]-L-lysyl-[protein] + 4 Fe(3+) + 2 hydrogen sulfide + 2 5'-deoxyadenosine + 2 L-methionine + 2 reduced [2Fe-2S]-[ferredoxin]. Its pathway is protein modification; protein lipoylation via endogenous pathway; protein N(6)-(lipoyl)lysine from octanoyl-[acyl-carrier-protein]: step 2/2. In terms of biological role, catalyzes the radical-mediated insertion of two sulfur atoms into the C-6 and C-8 positions of the octanoyl moiety bound to the lipoyl domains of lipoate-dependent enzymes, thereby converting the octanoylated domains into lipoylated derivatives. The sequence is that of Lipoyl synthase from Buchnera aphidicola subsp. Cinara cedri (strain Cc).